A 261-amino-acid chain; its full sequence is Uridylate kinase (261 aa).

The segment at 1–23 (MTEPDVAGAPASKPEPASTGAAS) is disordered. 36-39 (KLGG) is a binding site for ATP. Residue Gly-77 participates in UMP binding. 2 residues coordinate ATP: Gly-78 and Arg-82. UMP is bound by residues Asp-97 and 158–165 (MGLPYFST). Residues Phe-191 and Asp-194 each coordinate ATP.

It belongs to the UMP kinase family. Homohexamer.

It is found in the cytoplasm. The enzyme catalyses UMP + ATP = UDP + ADP. The protein operates within pyrimidine metabolism; CTP biosynthesis via de novo pathway; UDP from UMP (UMPK route): step 1/1. Inhibited by UTP. Its function is as follows. Catalyzes the reversible phosphorylation of UMP to UDP. The chain is Uridylate kinase from Mycobacterium tuberculosis (strain ATCC 25177 / H37Ra).